The chain runs to 722 residues: Delta-like protein 1 (722 aa).

Residues 1 to 17 (MGRRSALALAVVSALLC) form the signal peptide. Residues 18–545 (QVWSSGVFEL…MESQGGPFPW (528 aa)) lie on the Extracellular side of the membrane. In terms of domain architecture, DSL spans 176 to 220 (FVCDEHYYGEGCSVFCRPRDDAFGHFTCGDRGEKMCDPGWKGQYC). 27 cysteine pairs are disulfide-bonded: C178–C187, C191–C203, C211–C220, C225–C236, C229–C242, C244–C253, C256–C267, C262–C273, C275–C284, C291–C303, C297–C313, C315–C324, C331–C342, C336–C351, C353–C362, C369–C380, C374–C390, C392–C401, C408–C419, C413–C428, C430–C439, C446–C457, C451–C466, C468–C477, C484–C495, C489–C504, and C506–C515. EGF-like domains are found at residues 225–253 (CLPGCDDQHGYCDKPGECKCRVGWQGRYC), 256–284 (CIRYPGCLHGTCQQPWQCNCQEGWGGLFC), and 291–324 (CTHHKPCRNGATCTNTGQGSYTCSCRPGYTGANC). The 32-residue stretch at 331–362 (CAPSPCKNGASCTDLEDSFSCTCPPGFYGKVC) folds into the EGF-like 4; calcium-binding domain. 2 EGF-like domains span residues 369-401 (CADGPCFNGGRCSDNPDGGYTCHCPLGFSGFNC) and 408-439 (CGSSPCSNGAKCVDLGNSYLCRCQAGFSGRYC). In terms of domain architecture, EGF-like 7; calcium-binding spans 446-477 (CASSPCANGGTCRDSVNDFSCTCPPGYTGKNC). N476 carries an N-linked (GlcNAc...) asparagine glycan. In terms of domain architecture, EGF-like 8 spans 484-515 (CEHAPCHNGATCHQRGQRYMCECAQGYGGPNC). The helical transmembrane segment at 546 to 568 (VAVCAGVVLVLLLLLGCAAVVVC) threads the bilayer. Topologically, residues 569–722 (VRLKLQKHQP…KDECVIATEV (154 aa)) are cytoplasmic. K613 is covalently cross-linked (Glycyl lysine isopeptide (Lys-Gly) (interchain with G-Cter in ubiquitin)). Phosphothreonine is present on T638. Positions 655 to 664 (RDTHSKRDTK) are enriched in basic and acidic residues. The segment at 655–697 (RDTHSKRDTKCQSQSSAGEEKIAPTLRGGEIPDRKRPESVYST) is disordered. S693 carries the phosphoserine; by PKB modification. At S696 the chain carries Phosphoserine. The interaction with MAGI1 stretch occupies residues 719-722 (ATEV).

As to quaternary structure, homodimer. Interacts with TJP1. Interacts with MMP14; inhibits DLL1-induced Notch signaling. Interacts with MAGI1 (via PDZ domain); forms a complex with CTNNB1 and CDH2 and promotes recruitment to the adherens junction and stabilization on the cell surface. Interacts with PSEN1; undergoes a presenilin-dependent gamma-secretase cleavage that releases a Dll1-intracellular form. Interacts with MFAP5. Interacts with MIB1. Interacts with NEURL1B; leads to ubiquitination. Interacts with NEURL1. Interacts with SYNJ2BP; enhances DLL1 protein stability, and promotes Notch signaling in endothelial cells. Interacts with MAGI1, MAGI2, MAGI3 and MPDZ. Interacts (via ubiquitin) with EPN1 (via IUM domain); binding with NOTCH1 attached to neighboring cell, promotes ligand ubiquitination and EPN1 interaction, leading to NECD transendocytosis and Notch signaling. Interacts with NOTCH1. Post-translationally, ubiquitinated by MIB (MIB1 or MIB2), leading to its endocytosis and subsequent degradation. Ubiquitinated; promotes recycling back to the plasma membrane and confers a strong affinity for NOTCH1. Multi-ubiquitination of Lys-613 by MIB1 promotes both cis and trans-interaction with NOTCH1, as well as activation of Notch signaling. Ubiquitinated by NEURL1B. In terms of processing, phosphorylated in a membrane association-dependent manner. Phosphorylation at Ser-696 requires the presence of Ser-693, whereas phosphorylation at Thr-638 and Ser-693 occurs independently of the other sites. Phosphorylation is required for full ligand activity in vitro and affects surface presentation, ectodomain shedding, and endocytosis. Cleaved by MMP14; negatively regulates DLL1-induced Notch signaling in HPCs, modulating B-lymphocyte differentiation in bone marrow. Undergoes two consecutive processing events: a shedding event, partially by ADAM10, that generates a soluble extracellular form and an intracellular membrane-anchored form, followed by a gamma-secretase cleavage releasing an intracellular fragment. Post-translationally, O-fucosylated. Can be elongated to a disaccharide by MFNG. As to expression, in the embryo, expressed in the paraxial mesoderm and nervous system. Expressed at high levels in adult heart and at lower levels, in adult lung. Highly expressed in satellite cells from masseter and tongue than in satellite cells from leg and extraocular muscle.?.

The protein resides in the apical cell membrane. Its subcellular location is the cell junction. The protein localises to the adherens junction. It localises to the membrane raft. It is found in the cell membrane. The protein resides in the nucleus. Its function is as follows. Transmembrane ligand protein of NOTCH1, NOTCH2 and NOTCH3 receptors that binds the extracellular domain (ECD) of Notch receptor in a cis and trans fashion manner. Following transinteraction, ligand cells produce mechanical force that depends of a clathrin-mediated endocytosis, requiring ligand ubiquitination, EPN1 interaction, and actin polymerisation; these events promote Notch receptor extracellular domain (NECD) transendocytosis and triggers Notch signaling through induction of cleavage, hyperphosphorylation, and nuclear accumulation of the intracellular domain of Notch receptors (NICD). Is required for embryonic development and maintenance of adult stem cells in many different tissues and immune systeme; the DLL1-induced Notch signaling is mediated through an intercellular communication that regulates cell lineage, cell specification, cell patterning and morphogenesis through effects on differentiation and proliferation. Plays a role in brain development at different level, namely by regulating neuronal differentiation of neural precursor cells via cell-cell interaction, most likely through the lateral inhibitory system in an endogenous level dependent-manner. During neocortex development, Dll1-Notch signaling transmission is mediated by dynamic interactions between intermediate neurogenic progenitors and radial glia; the cell-cell interactions are mediated via dynamic and transient elongation processes, likely to reactivate/maintain Notch activity in neighboring progenitors, and coordinate progenitor cell division and differentiation across radial and zonal boundaries. During cerebellar development, regulates Bergmann glial monolayer formation and its morphological maturation through a Notch signaling pathway. At the retina and spinal cord level, regulates neurogenesis by preventing the premature differentiation of neural progenitors and also by maintaining progenitors in spinal cord through Notch signaling pathway. Also controls neurogenesis of the neural tube in a progenitor domain-specific fashion along the dorsoventral axis. Maintains quiescence of neural stem cells and plays a role as a fate determinant that segregates asymmetrically to one daughter cell during neural stem cells mitosis, resulting in neuronal differentiation in Dll1-inheriting cell. Plays a role in immune systeme development, namely the development of all T-cells and marginal zone (MZ) B cells. Blocks the differentiation of progenitor cells into the B-cell lineage while promoting the emergence of a population of cells with the characteristics of a T-cell/NK-cell precursor. Upon MMP14 cleavage, negatively regulates Notch signaling in haematopoietic progenitor cells to specifically maintain normal B-cell development in bone marrow. Also plays a role during muscle development. During early development, inhibits myoblasts differentiation from the medial dermomyotomal lip and later regulates progenitor cell differentiation. Directly modulates cell adhesion and basal lamina formation in satellite cells through Notch signaling. Maintains myogenic progenitors pool by suppressing differentiation through down-regulation of MYOD1 and is required for satellite cell homing and PAX7 expression. During craniofacial and trunk myogenesis suppresses differentiation of cranial mesoderm-derived and somite-derived muscle via MYOD1 regulation but in cranial mesoderm-derived progenitors, is neither required for satellite cell homing nor for PAX7 expression. Also plays a role during pancreatic cell development. During type B pancreatic cell development, may be involved in the initiation of proximodistal patterning in the early pancreatic epithelium. Stimulates multipotent pancreatic progenitor cells proliferation and pancreatic growth by maintaining HES1 expression and PTF1A protein levels. During fetal stages of development, is required to maintain arterial identity and the responsiveness of arterial endothelial cells for VEGFA through regulation of KDR activation and NRP1 expression. Controls sprouting angiogenesis and subsequent vertical branch formation through regulation on tip cell differentiation. Negatively regulates goblet cell differentiation in intestine and controls secretory fat commitment through lateral inhibition in small intestine. Plays a role during inner ear development; negatively regulates auditory hair cell differentiation. Plays a role during nephron development through Notch signaling pathway. Regulates growth, blood pressure and energy homeostasis. The sequence is that of Delta-like protein 1 (Dll1) from Mus musculus (Mouse).